A 90-amino-acid chain; its full sequence is MNKSQLIEKIAAGADISKAAAGRALDAIIASVTESLKEGDDVALVGFGTFAVKERAARTGRNPQTGKEITIAAAKVPSFRAGKALKDAVN.

This sequence belongs to the bacterial histone-like protein family. In terms of assembly, heterodimer of an alpha and a beta chain.

In terms of biological role, histone-like DNA-binding protein which is capable of wrapping DNA to stabilize it, and thus to prevent its denaturation under extreme environmental conditions. The protein is DNA-binding protein HU-beta (hupB) of Salmonella typhi.